A 470-amino-acid polypeptide reads, in one-letter code: Serine--tRNA ligase (470 aa).

272–274 (TAE) is an L-serine binding site. 303–305 (RAE) is a binding site for ATP. Glu326 serves as a coordination point for L-serine. 393–396 (EISS) is an ATP binding site. Position 428 (Ser428) interacts with L-serine.

It belongs to the class-II aminoacyl-tRNA synthetase family. Type-1 seryl-tRNA synthetase subfamily. In terms of assembly, homodimer. The tRNA molecule binds across the dimer.

The protein resides in the cytoplasm. It catalyses the reaction tRNA(Ser) + L-serine + ATP = L-seryl-tRNA(Ser) + AMP + diphosphate + H(+). It carries out the reaction tRNA(Sec) + L-serine + ATP = L-seryl-tRNA(Sec) + AMP + diphosphate + H(+). The protein operates within aminoacyl-tRNA biosynthesis; selenocysteinyl-tRNA(Sec) biosynthesis; L-seryl-tRNA(Sec) from L-serine and tRNA(Sec): step 1/1. Catalyzes the attachment of serine to tRNA(Ser). Is also able to aminoacylate tRNA(Sec) with serine, to form the misacylated tRNA L-seryl-tRNA(Sec), which will be further converted into selenocysteinyl-tRNA(Sec). The protein is Serine--tRNA ligase of Nitrobacter hamburgensis (strain DSM 10229 / NCIMB 13809 / X14).